The sequence spans 146 residues: Hemoglobin subunit beta (146 aa).

Residues 2–146 (HWSAEEKQLI…VAHALARKYH (145 aa)) form the Globin domain. Residues His63 and His92 each coordinate heme b.

It belongs to the globin family. Heterotetramer of two alpha chains and two beta chains. In terms of tissue distribution, red blood cells.

Functionally, involved in oxygen transport from the lung to the various peripheral tissues. This chain is Hemoglobin subunit beta (HBB), found in Stercorarius maccormicki (South polar skua).